A 237-amino-acid chain; its full sequence is Small ribosomal subunit protein eS4 (237 aa).

Residues 38-110 (LPLAVVVRDV…EAKYYDLKPI (73 aa)) form the S4 RNA-binding domain.

The protein belongs to the eukaryotic ribosomal protein eS4 family.

The protein is Small ribosomal subunit protein eS4 of Pyrobaculum calidifontis (strain DSM 21063 / JCM 11548 / VA1).